The following is a 155-amino-acid chain: MAEGEITTFAALTERFNLPLGNYKKPKLLYCSNGGHFLRILPDGTVDGTRDRSDQHIQLQLSAESAGEVYIKGTETGQYLAMDTEGLLYGSQTPNEECLFLERLEENHYNTYTSKKHAEKNWFVGLKKNGSCKRGPRTHYGQKAILFLPLPVSSD.

Ala-2 is modified (N-acetylalanine). The propeptide occupies Ala-2 to Arg-15. Position 33 (Asn-33) interacts with heparin. Residues Lys-127–Lys-143 are heparin-binding.

This sequence belongs to the heparin-binding growth factors family. In terms of assembly, monomer. Homodimer. Interacts with FGFR1, FGFR2, FGFR3 and FGFR4. Affinity between fibroblast growth factors (FGFs) and their receptors is increased by heparan sulfate glycosaminoglycans that function as coreceptors. Found in a complex with FGFBP1, FGF1 and FGF2. Interacts with FGFBP1. Part of a Cu(2+)-dependent multiprotein aggregate containing FGF1, S100A13 and SYT1. Interacts with SYT1. Interacts with S100A13. Interacts with LRRC59. Interacts with CSNKA, CSNKB and FIBP. While binding with LRRC59, CSNKA and FIBP seem mutually exclusive, CSNKB and FIBP may cooperatively interact with FGF1. Forms a ternary complex with FGFR1 and ITGAV:ITGB3 and induces the recruitment of PTPN11 to the complex. In the nucleus, phosphorylated by PKC/PRKCD.

It is found in the secreted. The protein resides in the cytoplasm. The protein localises to the cell cortex. Its subcellular location is the cytosol. It localises to the nucleus. Functionally, plays an important role in the regulation of cell survival, cell division, angiogenesis, cell differentiation and cell migration. Functions as a potent mitogen in vitro. Acts as a ligand for FGFR1 and integrins. Binds to FGFR1 in the presence of heparin leading to FGFR1 dimerization and activation via sequential autophosphorylation on tyrosine residues which act as docking sites for interacting proteins, leading to the activation of several signaling cascades. Binds to integrin ITGAV:ITGB3. Its binding to integrin, subsequent ternary complex formation with integrin and FGFR1, and the recruitment of PTPN11 to the complex are essential for FGF1 signaling. Induces the phosphorylation and activation of FGFR1, FRS2, MAPK3/ERK1, MAPK1/ERK2 and AKT1. Can induce angiogenesis. This is Fibroblast growth factor 1 (Fgf1) from Mus musculus (Mouse).